A 717-amino-acid polypeptide reads, in one-letter code: CRISPR-associated protein Cas8b (717 aa).

Disordered stretches follow at residues 263–283 and 698–717; these read IGVF…DQSW and HEKE…STTN. Positions 701–717 are enriched in acidic residues; that stretch reads EDEDDQDTEEPAESTTN.

The protein resides in the cytoplasm. Its function is as follows. CRISPR (clustered regularly interspaced short palindromic repeat) is an adaptive immune system that provides protection against mobile genetic elements (viruses, transposable elements and conjugative plasmids). CRISPR clusters contain sequences complementary to antecedent mobile elements and target invading nucleic acids. CRISPR clusters are transcribed and processed into CRISPR RNA (crRNA). Plasmid targeted by CRISPR locus P1 transform wild-type cells very poorly. This subunit might be involved in stabilizing crRNA. This is CRISPR-associated protein Cas8b from Haloferax volcanii (strain ATCC 29605 / DSM 3757 / JCM 8879 / NBRC 14742 / NCIMB 2012 / VKM B-1768 / DS2) (Halobacterium volcanii).